A 1131-amino-acid polypeptide reads, in one-letter code: Protein TOPLESS (1131 aa).

The region spanning 4-36 (LSRELVFLILQFLDEEKFKETVHKLEQESGFFF) is the LisH domain. The 59-residue stretch at 34–92 (FFFNMKYFEDEVHNGNWDEVEKYLSGFTKVDDNRYSMKIFFEIRKQKYLEALDKHDRPK) folds into the CTLH domain. A Phosphoserine modification is found at Ser214. The disordered stretch occupies residues 286-305 (TPPTNASLDYPSADSEHVSK). WD repeat units follow at residues 353–393 (SQGS…RLVQ), 415–454 (EPVVSVNRVIWSPDGSLFGVAYSRHIVQLYSYHGGEDMRQ), 460–501 (AHVG…KRHT), 504–545 (GHEA…SRVD), 548–591 (APGR…VKRT), 595–634 (FHKRSLGVVQFDTTKNRYLAAGDDFSIKFWDMDAVQLLTA), 639–678 (GGLQASPRIRFNKEGSLLAVSGNENVIKIMANSDGLRLLH), 710–756 (DRSA…EPSQ), 766–805 (LRVAKISRLIFTNSGNAILALASNAIHLLWKWQRNERNAT), 833–871 (NPEEAVPCFALSKNDSYVMSASGGKISLFNMMTFKTMAT), 874–914 (PPPP…VKSK), 917–956 (GHSKRITGLAFSNVLNVLVSSGADAQLCVWNTDGWEKQRS), 967–1005 (NSAPSDTRVQFHQDQAHFLVVHETQLAIYETTKLECMKQ), 1010–1049 (ESLAPITHATFSCDSQLVYASFMDATVCVFSSANLRLRCR), and 1060–1102 (LSNS…GKWG). Residues 1100-1131 (KWGVAPPAENGSASGAPTAPSVGASASDQPQR) are disordered.

In terms of assembly, tetramer. Homodimer. Interacts (via the LisH domain) with WUS (via the C-terminal domain). Interacts with NINJA/AFPH2. Interacts with IAA1; IAA2; IAA3; IAA4; IAA6; IAA8; IAA9; IAA11; IAA13; IAA14; IAA17; IAA18; IAA26; IAA27 and IAA28. Interacts (via the LisH domain) with IAA12/BDL (via domain I). Can form a complex with IAA12 and ARF5. Interacts with AP2 (via EAR motif) and HDA19. Interacts with TIFY5A/JAZ8 (via EAR motif). Interacts with SPEAR3/TIE1. Interacts with SPL (via EAR motif). Interacts with ZAT2 and ZAT3 (via the EAR motif). Interacts with JAZ13 (via EAR motif). Interacts with GIR1 and GIR2. As to expression, expressed in embryo and in extraembryonic tissues. Expressed in inflorescences, flowers, floral meristems, developing anthers and ovules. Detected in the vascular tissues, shoot apical meristem, cotyledons and young leaves. Expressed ubiquitously in the pistils, stamens and pollens.

Its subcellular location is the nucleus. Transcriptional corepressor. May repress the expression of root-promoting genes in the top half of the embryo to allow proper differentiation of the shoot pole during the transition stage of embryogenesis. Regulates the expression of PLT1 and PLT2. Negative regulator of jasmonate responses. Negative regulator of auxin responses. Negative regulator of multiple floral organ identity genes. Required for ovule development. The polypeptide is Protein TOPLESS (TPL) (Arabidopsis thaliana (Mouse-ear cress)).